Consider the following 181-residue polypeptide: ADP-ribosylation factor 1-like 2 (181 aa).

The N-myristoyl glycine moiety is linked to residue Gly2. The important for the stable binding to the membranes stretch occupies residues 3–16 (NVFGSLFKGLFGKR). GTP contacts are provided by residues 24 to 32 (GLDAAGKTT), 126 to 129 (NKQD), and Ala160.

The protein belongs to the small GTPase superfamily. Arf family. As to expression, expressed in hypodermis, intestine, spermatheca, uterus, gonadal sheath, vulva cells, pharynx muscle, body wall muscle, head neurons, ventral nerve cord.

It localises to the golgi apparatus membrane. The enzyme catalyses GTP + H2O = GDP + phosphate + H(+). Its activity is regulated as follows. Alternates between an inactive GDP-bound form and an active GTP-bound form. Activated by a guanine nucleotide-exchange factor (GEF) and inactivated by GTPase-activating protein (GAP). In terms of biological role, small GTPase involved in protein trafficking between different compartments. Modulates vesicle budding and uncoating within the Golgi complex. In its GTP-bound form, triggers the recruitment of coatomer proteins to the Golgi membrane. The hydrolysis of ARF1-bound GTP, which is mediated by ARFGAPs proteins, is required for dissociation of coat proteins from Golgi membranes and vesicles. Involved in endoplasmic reticulum dynamics during embryogenesis. Also required for adult germline function. Plays a role in cell shedding during embryogenesis probably by promoting the endocytosis of cell adhesion molecules. During neurogenesis, involved in cell autonomous Q.p neuroblast asymmetric divisions that generate one precursor cell and one apoptotic cell, probably by controlling endocytosis. Plays a role in maintaining mitochondrial morphology. The protein is ADP-ribosylation factor 1-like 2 of Caenorhabditis elegans.